We begin with the raw amino-acid sequence, 235 residues long: Ribonuclease P protein component 3 (235 aa).

It belongs to the eukaryotic/archaeal RNase P protein component 3 family. In terms of assembly, consists of a catalytic RNA component and at least 4-5 protein subunits.

Its subcellular location is the cytoplasm. The enzyme catalyses Endonucleolytic cleavage of RNA, removing 5'-extranucleotides from tRNA precursor.. In terms of biological role, part of ribonuclease P, a protein complex that generates mature tRNA molecules by cleaving their 5'-ends. The chain is Ribonuclease P protein component 3 from Haloarcula marismortui (strain ATCC 43049 / DSM 3752 / JCM 8966 / VKM B-1809) (Halobacterium marismortui).